The following is a 123-amino-acid chain: Large ribosomal subunit protein bL12 (123 aa).

It belongs to the bacterial ribosomal protein bL12 family. In terms of assembly, homodimer. Part of the ribosomal stalk of the 50S ribosomal subunit. Forms a multimeric L10(L12)X complex, where L10 forms an elongated spine to which 2 to 4 L12 dimers bind in a sequential fashion. Binds GTP-bound translation factors.

Forms part of the ribosomal stalk which helps the ribosome interact with GTP-bound translation factors. Is thus essential for accurate translation. In Cytophaga hutchinsonii (strain ATCC 33406 / DSM 1761 / CIP 103989 / NBRC 15051 / NCIMB 9469 / D465), this protein is Large ribosomal subunit protein bL12.